We begin with the raw amino-acid sequence, 300 residues long: 1D-myo-inositol 2-acetamido-2-deoxy-alpha-D-glucopyranoside deacetylase (300 aa).

3 residues coordinate Zn(2+): His13, Asp16, and His147.

Belongs to the MshB deacetylase family. Requires Zn(2+) as cofactor.

It catalyses the reaction 1D-myo-inositol 2-acetamido-2-deoxy-alpha-D-glucopyranoside + H2O = 1D-myo-inositol 2-amino-2-deoxy-alpha-D-glucopyranoside + acetate. Functionally, catalyzes the deacetylation of 1D-myo-inositol 2-acetamido-2-deoxy-alpha-D-glucopyranoside (GlcNAc-Ins) in the mycothiol biosynthesis pathway. The sequence is that of 1D-myo-inositol 2-acetamido-2-deoxy-alpha-D-glucopyranoside deacetylase from Mycolicibacterium paratuberculosis (strain ATCC BAA-968 / K-10) (Mycobacterium paratuberculosis).